The chain runs to 307 residues: tRNA pseudouridine synthase B (307 aa).

The active-site Nucleophile is Asp-41.

Belongs to the pseudouridine synthase TruB family. Type 1 subfamily.

The catalysed reaction is uridine(55) in tRNA = pseudouridine(55) in tRNA. In terms of biological role, responsible for synthesis of pseudouridine from uracil-55 in the psi GC loop of transfer RNAs. This Prochlorococcus marinus (strain AS9601) protein is tRNA pseudouridine synthase B.